Consider the following 780-residue polypeptide: ATP-dependent 6-phosphofructokinase, liver type (780 aa).

Ala2 is modified (N-acetylalanine). Residues 2–390 (ATVDLEKLRM…NWKIYKLLAH (389 aa)) form an N-terminal catalytic PFK domain 1 region. Residues Gly25, 88–89 (RC), and 118–121 (GDGS) each bind ATP. Asp119 contacts Mg(2+). Substrate is bound by residues 164 to 166 (SID), Arg201, 208 to 210 (MGR), Glu264, Arg292, and 298 to 301 (HVQR). Asp166 acts as the Proton acceptor in catalysis. Ser377 is modified (phosphoserine). Residues 391-400 (QKVSKEKSNF) form an interdomain linker region. The C-terminal regulatory PFK domain 2 stretch occupies residues 401–780 (SLAILNVGAP…RRTLSIDKGF (380 aa)). Beta-D-fructose 2,6-bisphosphate-binding positions include Arg470, 527–531 (TISNN), Arg565, 572–574 (MGG), and Glu628. Ser529 carries O-linked (GlcNAc) serine glycosylation. Tyr640 carries the post-translational modification Phosphotyrosine. Residues Arg654, 660–663 (HLQQ), and Arg734 contribute to the beta-D-fructose 2,6-bisphosphate site. At Ser775 the chain carries Phosphoserine.

Belongs to the phosphofructokinase type A (PFKA) family. ATP-dependent PFK group I subfamily. Eukaryotic two domain clade 'E' sub-subfamily. As to quaternary structure, homo- and heterotetramers. Phosphofructokinase (PFK) enzyme functions as a tetramer composed of different combinations of 3 types of subunits, called PFKM (M), PFKL (L) and PFKP (P). The composition of the PFK tetramer differs according to the tissue type it is present in. The kinetic and regulatory properties of the tetrameric enzyme are dependent on the subunit composition, hence can vary across tissues. Mg(2+) serves as cofactor. In terms of processing, glcNAcylation at Ser-529 by OGT decreases enzyme activity, leading to redirect glucose flux through the oxidative pentose phosphate pathway. Glycosylation is stimulated by both hypoxia and glucose deprivation.

It is found in the cytoplasm. It catalyses the reaction beta-D-fructose 6-phosphate + ATP = beta-D-fructose 1,6-bisphosphate + ADP + H(+). It functions in the pathway carbohydrate degradation; glycolysis; D-glyceraldehyde 3-phosphate and glycerone phosphate from D-glucose: step 3/4. Its activity is regulated as follows. Allosterically activated by ADP, AMP, or fructose 2,6-bisphosphate, and allosterically inhibited by ATP or citrate. GlcNAcylation by OGT overcomes allosteric regulation. Catalyzes the phosphorylation of D-fructose 6-phosphate to fructose 1,6-bisphosphate by ATP, the first committing step of glycolysis. Negatively regulates the phagocyte oxidative burst in response to bacterial infection by controlling cellular NADPH biosynthesis and NADPH oxidase-derived reactive oxygen species. Upon macrophage activation, drives the metabolic switch toward glycolysis, thus preventing glucose turnover that produces NADPH via pentose phosphate pathway. This is ATP-dependent 6-phosphofructokinase, liver type (Pfkl) from Rattus norvegicus (Rat).